We begin with the raw amino-acid sequence, 941 residues long: Coiled-coil domain-containing protein 39 (941 aa).

Coiled-coil stretches lie at residues 16 to 122 (AIPV…ENGI), 164 to 273 (AQQD…ESEI), 306 to 605 (QLKG…EIKV), and 665 to 825 (IKAA…EEQD). Residues 868–941 (PTASTKGSRQ…SNVKSKKSSK (74 aa)) form a disordered region. Composition is skewed to low complexity over residues 871–903 (STKG…SQSS) and 914–934 (SSSL…SSNV). Phosphoserine occurs at positions 892 and 900.

Belongs to the CCDC39 family. As to expression, mainly expressed in nasal brushings and, to a lesser extent, in lungs and testis.

It localises to the cytoplasm. The protein resides in the cytoskeleton. Its subcellular location is the cilium axoneme. Functionally, required for assembly of dynein regulatory complex (DRC) and inner dynein arm (IDA) complexes, which are responsible for ciliary beat regulation, thereby playing a central role in motility in cilia and flagella. Probably acts together with CCDC40 to form a molecular ruler that determines the 96 nanometer (nm) repeat length and arrangements of components in cilia and flagella. Not required for outer dynein arm complexes assembly. The protein is Coiled-coil domain-containing protein 39 of Homo sapiens (Human).